The chain runs to 122 residues: MIQTETRLKVADNSGARELLVIRVMGGSKRKTGNIGDIVVAAVKQATPGGVVKKGDVVKAVIVRTKSGARREDGSYIKFDENAAVIINADKSPRGTRIFGPVARELREGDFMKIVSLAPEVL.

It belongs to the universal ribosomal protein uL14 family. Part of the 50S ribosomal subunit. Forms a cluster with proteins L3 and L19. In the 70S ribosome, L14 and L19 interact and together make contacts with the 16S rRNA in bridges B5 and B8.

Its function is as follows. Binds to 23S rRNA. Forms part of two intersubunit bridges in the 70S ribosome. This chain is Large ribosomal subunit protein uL14, found in Lactobacillus delbrueckii subsp. bulgaricus (strain ATCC BAA-365 / Lb-18).